A 626-amino-acid chain; its full sequence is Chaperone protein HtpG (626 aa).

Residues 1 to 331 (MSETVERHEF…TDDLPLNVSR (331 aa)) are a; substrate-binding. The segment at 332-544 (EMLQSTPTLQ…GMGPDLQMQR (213 aa)) is b. The tract at residues 545 to 626 (LLRRAGRGFG…GTAAKPAESA (82 aa)) is c.

This sequence belongs to the heat shock protein 90 family. Homodimer.

It localises to the cytoplasm. In terms of biological role, molecular chaperone. Has ATPase activity. The sequence is that of Chaperone protein HtpG from Methylorubrum extorquens (strain PA1) (Methylobacterium extorquens).